The chain runs to 118 residues: Small ribosomal subunit protein uS13 (118 aa).

The interval 92–118 (KKHLPVRGQRTKTNARTRKGPRKPIKK) is disordered.

This sequence belongs to the universal ribosomal protein uS13 family. As to quaternary structure, part of the 30S ribosomal subunit. Forms a loose heterodimer with protein S19. Forms two bridges to the 50S subunit in the 70S ribosome.

In terms of biological role, located at the top of the head of the 30S subunit, it contacts several helices of the 16S rRNA. In the 70S ribosome it contacts the 23S rRNA (bridge B1a) and protein L5 of the 50S subunit (bridge B1b), connecting the 2 subunits; these bridges are implicated in subunit movement. Contacts the tRNAs in the A and P-sites. This chain is Small ribosomal subunit protein uS13, found in Wigglesworthia glossinidia brevipalpis.